The primary structure comprises 348 residues: Methylthioribose-1-phosphate isomerase (348 aa).

Substrate-binding positions include 53 to 55, Arg-93, and Gln-197; that span reads RGA. Asp-238 serves as the catalytic Proton donor. Residue 248-249 participates in substrate binding; sequence NK.

It belongs to the eIF-2B alpha/beta/delta subunits family. MtnA subfamily.

The catalysed reaction is 5-(methylsulfanyl)-alpha-D-ribose 1-phosphate = 5-(methylsulfanyl)-D-ribulose 1-phosphate. It participates in amino-acid biosynthesis; L-methionine biosynthesis via salvage pathway; L-methionine from S-methyl-5-thio-alpha-D-ribose 1-phosphate: step 1/6. Functionally, catalyzes the interconversion of methylthioribose-1-phosphate (MTR-1-P) into methylthioribulose-1-phosphate (MTRu-1-P). The polypeptide is Methylthioribose-1-phosphate isomerase (Gloeobacter violaceus (strain ATCC 29082 / PCC 7421)).